The chain runs to 338 residues: DPKIGGVMIMGDRGTGKSTTIRALADLLPEIPVVANDPFNSDPSDPDLMSDEVRQKSGTGAEIPIEFKKVQMVDLPLGATEDRVCGTIDIEKALSEGVKAFEPGLLAKANRGILYVDEVNLLDDHLVDVLLDSAASGWNTVEREGISIRHPARFVLVGSGNPEEGELRPQLLDRFGMHAEIHTVKEPALRVQIVEQRSEFDQNPPTFLEKYNPEQTALQKKIVEAQKLLPEVKLDYDLRVKISEVCSELDVDGLRGDIVTNRAAKALTAYEGRTEVTVDDIRRVITLCLRHRLRKDPLESIDSGYKVEKVFARIFGVELLEDDSSQKNGAGQIKTGVR.

11-18 (GDRGTGKS) is a binding site for ATP.

The protein belongs to the Mg-chelatase subunits D/I family.

The enzyme catalyses protoporphyrin IX + Mg(2+) + ATP + H2O = Mg-protoporphyrin IX + ADP + phosphate + 3 H(+). Its pathway is porphyrin-containing compound metabolism; chlorophyll biosynthesis. Involved in chlorophyll biosynthesis; introduces a magnesium ion into protoporphyrin IX to yield Mg-protoporphyrin IX. This is Magnesium-chelatase subunit ChlI (chlI) from Anabaena variabilis.